The following is a 334-amino-acid chain: Holliday junction branch migration complex subunit RuvB (334 aa).

The segment at 1–182 (MDERLVSTEA…FGVHARLEYY (182 aa)) is large ATPase domain (RuvB-L). ATP is bound by residues L21, R22, G63, K66, T67, T68, 129–131 (EDF), R172, Y182, and R219. T67 contacts Mg(2+). The segment at 183-253 (EQRDLAHIVS…IAEDALERLQ (71 aa)) is small ATPAse domain (RuvB-S). Positions 256–334 (KLGLDHIDHK…HFQMEVPIRD (79 aa)) are head domain (RuvB-H). The DNA site is built by R311 and R316.

This sequence belongs to the RuvB family. As to quaternary structure, homohexamer. Forms an RuvA(8)-RuvB(12)-Holliday junction (HJ) complex. HJ DNA is sandwiched between 2 RuvA tetramers; dsDNA enters through RuvA and exits via RuvB. An RuvB hexamer assembles on each DNA strand where it exits the tetramer. Each RuvB hexamer is contacted by two RuvA subunits (via domain III) on 2 adjacent RuvB subunits; this complex drives branch migration. In the full resolvosome a probable DNA-RuvA(4)-RuvB(12)-RuvC(2) complex forms which resolves the HJ.

Its subcellular location is the cytoplasm. It carries out the reaction ATP + H2O = ADP + phosphate + H(+). Functionally, the RuvA-RuvB-RuvC complex processes Holliday junction (HJ) DNA during genetic recombination and DNA repair, while the RuvA-RuvB complex plays an important role in the rescue of blocked DNA replication forks via replication fork reversal (RFR). RuvA specifically binds to HJ cruciform DNA, conferring on it an open structure. The RuvB hexamer acts as an ATP-dependent pump, pulling dsDNA into and through the RuvAB complex. RuvB forms 2 homohexamers on either side of HJ DNA bound by 1 or 2 RuvA tetramers; 4 subunits per hexamer contact DNA at a time. Coordinated motions by a converter formed by DNA-disengaged RuvB subunits stimulates ATP hydrolysis and nucleotide exchange. Immobilization of the converter enables RuvB to convert the ATP-contained energy into a lever motion, pulling 2 nucleotides of DNA out of the RuvA tetramer per ATP hydrolyzed, thus driving DNA branch migration. The RuvB motors rotate together with the DNA substrate, which together with the progressing nucleotide cycle form the mechanistic basis for DNA recombination by continuous HJ branch migration. Branch migration allows RuvC to scan DNA until it finds its consensus sequence, where it cleaves and resolves cruciform DNA. In Bacillus pumilus (strain SAFR-032), this protein is Holliday junction branch migration complex subunit RuvB.